Here is a 419-residue protein sequence, read N- to C-terminus: CDP-diacylglycerol--serine O-phosphatidyltransferase 3 (419 aa).

The tract at residues 1–51 (MPVRRRWYPPSSTAAQPSPDGGDVNTDDADACPSSRQQRPPSLPQHSAPIH) is disordered. The span at 33–47 (PSSRQQRPPSLPQHS) shows a compositional bias: low complexity. The next 7 membrane-spanning stretches (helical) occupy residues 103 to 123 (PHTVSVLLAGACLLIWASGVL), 142 to 162 (WAMIAVFLAYCTLQAPSTILI), 168 to 188 (VWRLVHGMAVVYLVALTFLLF), 260 to 280 (LLLWVLSVGFELMELTFRHML), 287 to 307 (WWDSIILDIMICNWFGIWAGM), 359 to 379 (FIQVFCLCVGFMTVELNTFFL), and 384 to 404 (WIPPRNPLVVYRLILWWLIAI).

Belongs to the CDP-alcohol phosphatidyltransferase class-I family.

Its subcellular location is the endoplasmic reticulum membrane. It catalyses the reaction a CDP-1,2-diacyl-sn-glycerol + L-serine = a 1,2-diacyl-sn-glycero-3-phospho-L-serine + CMP + H(+). It functions in the pathway phospholipid metabolism; phosphatidylethanolamine biosynthesis; phosphatidylethanolamine from CDP-diacylglycerol: step 1/2. Functionally, catalyzes a base-exchange reaction in which the polar head group of phosphatidylethanolamine (PE) or phosphatidylcholine (PC) is replaced by L-serine. The chain is CDP-diacylglycerol--serine O-phosphatidyltransferase 3 (PSS3) from Oryza sativa subsp. japonica (Rice).